Reading from the N-terminus, the 197-residue chain is Peptidyl-tRNA hydrolase (197 aa).

Tyr-21 serves as a coordination point for tRNA. Catalysis depends on His-26, which acts as the Proton acceptor. TRNA-binding residues include Tyr-72, Asn-74, and Asn-120.

This sequence belongs to the PTH family. Monomer.

Its subcellular location is the cytoplasm. The catalysed reaction is an N-acyl-L-alpha-aminoacyl-tRNA + H2O = an N-acyl-L-amino acid + a tRNA + H(+). Hydrolyzes ribosome-free peptidyl-tRNAs (with 1 or more amino acids incorporated), which drop off the ribosome during protein synthesis, or as a result of ribosome stalling. Its function is as follows. Catalyzes the release of premature peptidyl moieties from peptidyl-tRNA molecules trapped in stalled 50S ribosomal subunits, and thus maintains levels of free tRNAs and 50S ribosomes. This chain is Peptidyl-tRNA hydrolase, found in Saccharophagus degradans (strain 2-40 / ATCC 43961 / DSM 17024).